Reading from the N-terminus, the 556-residue chain is MSVSAFNRRWAAVILEALTRHGVRHICIAPGSRSTPLTLAAAENSAFIHHTHFDERGLGHLALGLAKVSKQPVAVIVTSGTAVANLYPALIEAGLTGEKLILLTADRPPELIDCGANQAIRQPGMFASHPTHSISLPRPTQDIPARWLVSTIDHALGTLHAGGVHINCPFAEPLYGEMDDTGLSWQQRLGDWWQDDKPWLREAPSLESEKQRDWFFWRQKRGVVVAGRMSAEEGKKVALWAQTLGWPLIGDVLSQTGQPLPCADLWLGNAKATSELQQAQIVVQLGSSLTGKRLLQWQASCEPEEYWIVDDIEGRLDPAHHRGRRLIANIADWLELHPAEKRQPWCVEIPRLAEQAMQAVIARRDAFGEAQLAHRISDYLPEQGQLFVGNSLVVRLIDALSQLPAGYPVYSNRGASGIDGLLSTAAGVQRASGKPTLAIVGDLSALYDLNALALLRQVSAPLVLIVVNNNGGQIFSLLPTPQSERERFYLMPQNVHFEHAAAMFELKYHRPQNWQELETAFADAWRTPTTTVIEMVVNDTDGAQTLQQLLAQVSHL.

The protein belongs to the TPP enzyme family. MenD subfamily. Homodimer. Mg(2+) serves as cofactor. The cofactor is Mn(2+). It depends on thiamine diphosphate as a cofactor.

It catalyses the reaction isochorismate + 2-oxoglutarate + H(+) = 5-enolpyruvoyl-6-hydroxy-2-succinyl-cyclohex-3-ene-1-carboxylate + CO2. It functions in the pathway quinol/quinone metabolism; 1,4-dihydroxy-2-naphthoate biosynthesis; 1,4-dihydroxy-2-naphthoate from chorismate: step 2/7. The protein operates within quinol/quinone metabolism; menaquinone biosynthesis. In terms of biological role, catalyzes the thiamine diphosphate-dependent decarboxylation of 2-oxoglutarate and the subsequent addition of the resulting succinic semialdehyde-thiamine pyrophosphate anion to isochorismate to yield 2-succinyl-5-enolpyruvyl-6-hydroxy-3-cyclohexene-1-carboxylate (SEPHCHC). The protein is 2-succinyl-5-enolpyruvyl-6-hydroxy-3-cyclohexene-1-carboxylate synthase of Shigella boydii serotype 4 (strain Sb227).